We begin with the raw amino-acid sequence, 808 residues long: Sucrose synthase 4 (808 aa).

A GT-B glycosyltransferase region spans residues 277–754 (MVFNVVILSP…GLERIQEKYT (478 aa)).

This sequence belongs to the glycosyltransferase 1 family. Plant sucrose synthase subfamily. As to expression, detected in the whole plant with highest expression in young rosette leaves and roots.

The catalysed reaction is an NDP-alpha-D-glucose + D-fructose = a ribonucleoside 5'-diphosphate + sucrose + H(+). In terms of biological role, sucrose-cleaving enzyme that provides UDP-glucose and fructose for various metabolic pathways. This chain is Sucrose synthase 4 (SUS4), found in Arabidopsis thaliana (Mouse-ear cress).